We begin with the raw amino-acid sequence, 242 residues long: 1-(5-phosphoribosyl)-5-[(5-phosphoribosylamino)methylideneamino] imidazole-4-carboxamide isomerase (242 aa).

D10 acts as the Proton acceptor in catalysis. The active-site Proton donor is the D132.

It belongs to the HisA/HisF family.

It is found in the cytoplasm. It catalyses the reaction 1-(5-phospho-beta-D-ribosyl)-5-[(5-phospho-beta-D-ribosylamino)methylideneamino]imidazole-4-carboxamide = 5-[(5-phospho-1-deoxy-D-ribulos-1-ylimino)methylamino]-1-(5-phospho-beta-D-ribosyl)imidazole-4-carboxamide. The protein operates within amino-acid biosynthesis; L-histidine biosynthesis; L-histidine from 5-phospho-alpha-D-ribose 1-diphosphate: step 4/9. The protein is 1-(5-phosphoribosyl)-5-[(5-phosphoribosylamino)methylideneamino] imidazole-4-carboxamide isomerase of Streptococcus sanguinis (strain SK36).